Reading from the N-terminus, the 519-residue chain is Demethylepipodophyllotoxin synthase (519 aa).

The chain crosses the membrane as a helical span at residues 6–26 (CLETLLLGFFVLLPCFFYFVW). Cys-458 is a heme binding site.

This sequence belongs to the cytochrome P450 family. The cofactor is heme. As to expression, rhizome-specific expression.

It localises to the membrane. It carries out the reaction (-)-4'-desmethyl-deoxypodophyllotoxin + reduced [NADPH--hemoprotein reductase] + O2 = 4'-demethylepipodophyllotoxin + oxidized [NADPH--hemoprotein reductase] + H2O + H(+). It participates in aromatic compound metabolism; phenylpropanoid biosynthesis. Cytochrome P450 involved in the biosynthesis of etoposide, a chemotherapeutic compound of the topoisomerase inhibitor family. Catalyzes the hydroxylation of deoxypodophyllotoxin to form epipodophyllotoxin. This is Demethylepipodophyllotoxin synthase from Sinopodophyllum hexandrum (Himalayan may apple).